The sequence spans 154 residues: MRCPFCGNVDTQVKDSRPAEDNVAIRRRRFCPACGGRFTTYERVQLRDLVVVKSSGRREDFDRTKLERSIRIAMQKRPIEPERIDQMISGIVRRLESMGDTDIPSKVIGEIVMETLARIDTVAYVRFASVYKNFQAADDFDKFVSELRPGLVEE.

A zinc finger lies at 3–34 (CPFCGNVDTQVKDSRPAEDNVAIRRRRFCPAC). Positions 49–139 (LVVVKSSGRR…VYKNFQAADD (91 aa)) constitute an ATP-cone domain.

This sequence belongs to the NrdR family. It depends on Zn(2+) as a cofactor.

Its function is as follows. Negatively regulates transcription of bacterial ribonucleotide reductase nrd genes and operons by binding to NrdR-boxes. The sequence is that of Transcriptional repressor NrdR from Paracoccus denitrificans (strain Pd 1222).